The primary structure comprises 628 residues: Kelch-like protein diablo (628 aa).

Residues 1-56 (MGDLPGSTGGGSGPAAAGNASGNSSSAGNTGLGVAGTTGVDRPPSPARLSHTSEKH) are disordered. Low complexity predominate over residues 14 to 29 (PAAAGNASGNSSSAGN). The BTB domain maps to 74–141 (CDVVLNVGGR…CYTAHIIVEE (68 aa)). A BACK domain is found at 176-278 (CLGIRAFADT…SPKFLVGTVG (103 aa)). Kelch repeat units lie at residues 325-371 (VLFA…VLND), 373-419 (LYAV…VLDG), 420-466 (FLYA…VLGG), 468-513 (LYAI…VFNN), 515-560 (IYAV…VVNG), and 561-607 (QLYA…VMRA).

The protein operates within protein modification; protein ubiquitination. Probable substrate-specific adapter of an E3 ubiquitin-protein ligase complex which mediates the ubiquitination and subsequent proteasomal degradation of target proteins. May have a role in synapse differentiation and growth. This Drosophila persimilis (Fruit fly) protein is Kelch-like protein diablo.